The chain runs to 1111 residues: MASTPPQTSKKVRNNSGSGQTVKFARRTSSGRYVSLSRDNIELSGELSGDYSNYTVHIPPTPDNQPMATKAEEQYVSNSLFTGGFNSVTRAHLMDKVIDSDVTHPQMAGAKGSSCAMPACDGNVMKDERGKDVMPCECRFKICRDCFMDAQKETGLCPGCKEQYKIGDLDDDTPDYSSGALPLPAPGKDQRGNNNNMSMMKRNQNGEFDHNRWLFETQGTYGYGNAYWPQDEMYGDDMDEGMRGGMVETADKPWRPLSRRIPIPAAIISPYRLLIVIRFVVLCFFLTWRIRNPNEDAIWLWLMSIICELWFGFSWILDQIPKLCPINRSTDLEVLRDKFDMPSPSNPTGRSDLPGIDLFVSTADPEKEPPLVTANTILSILAVDYPVEKVSCYLSDDGGALLSFEAMAEAASFADLWVPFCRKHNIEPRNPDSYFSLKIDPTKNKSRIDFVKDRRKIKREYDEFKVRINGLPDSIRRRSDAFNAREEMKALKQMRESGGDPTEPVKVPKATWMADGTHWPGTWAASTREHSKGDHAGILQVMLKPPSSDPLIGNSDDKVIDFSDTDTRLPMFVYVSREKRPGYDHNKKAGAMNALVRASAILSNGPFILNLDCDHYIYNCKAVREGMCFMMDRGGEDICYIQFPQRFEGIDPSDRYANNNTVFFDGNMRALDGVQGPVYVGTGTMFRRFALYGFDPPNPDKLLEKKESETEALTTSDFDPDLDVTQLPKRFGNSTLLAESIPIAEFQGRPLADHPAVKYGRPPGALRVPRDPLDATTVAESVSVISCWYEDKTEWGDRVGWIYGSVTEDVVTGYRMHNRGWRSVYCITKRDSFRGSAPINLTDRLHQVLRWATGSVEIFFSRNNAILASKRLKFLQRLAYLNVGIYPFTSLFLILYCFLPAFSLFSGQFIVRTLSISFLVYLLMITICLIGLAVLEVKWSGIGLEEWWRNEQWWLISGTSSHLYAVVQGVLKVIAGIEISFTLTTKSGGDDNEDIYADLYIVKWSSLMIPPIVIAMVNIIAIVVAFIRTIYQAVPQWSKLIGGAFFSFWVLAHLYPFAKGLMGRRGKTPTIVFVWAGLIAITISLLWTAINPNTGPAAAAEGVGGGGFQFP.

Disordered regions lie at residues 1-26 and 175-202; these read MAST…KFAR and DYSS…MMKR. Positions 192–202 are enriched in polar residues; that stretch reads GNNNNMSMMKR. Transmembrane regions (helical) follow at residues 266 to 286 and 297 to 317; these read AIIS…CFFL and AIWL…SWIL. Residues aspartate 397 and aspartate 809 contribute to the active site. The next 6 helical transmembrane spans lie at 891-911, 914-934, 963-983, 1007-1027, 1040-1060, and 1070-1090; these read LFLI…QFIV, LSIS…GLAV, LYAV…SFTL, LMIP…VAFI, LIGG…FAKG, and TIVF…WTAI.

This sequence belongs to the glycosyltransferase 2 family. Plant cellulose synthase-like D subfamily.

It localises to the golgi apparatus membrane. In terms of biological role, thought to be a Golgi-localized beta-glycan synthase that polymerize the backbones of noncellulosic polysaccharides (hemicelluloses) of plant cell wall. In Arabidopsis thaliana (Mouse-ear cress), this protein is Cellulose synthase-like protein D4 (CSLD4).